A 106-amino-acid chain; its full sequence is Protein Rev (106 aa).

The interval 8 to 16 (LIKFLYQSN) is homomultimerization. Residues 14 to 39 (QSNPPPKPEGTRQARRNRRRRWRERQ) are disordered. Positions 24 to 40 (TRQARRNRRRRWRERQR) match the Nuclear localization signal and RNA-binding (RRE) motif. A compositionally biased stretch (basic residues) spans 26-37 (QARRNRRRRWRE). A Nuclear export signal and binding to XPO1 motif is present at residues 63–74 (LQLPPLERLTLD). Serine 82 and serine 89 each carry phosphoserine; by host. Residues 82-106 (SGTQGVGSPQILVESPTVLESGTKE) form a disordered region.

This sequence belongs to the HIV-1 REV protein family. As to quaternary structure, homomultimer; when bound to the RRE. Multimeric assembly is essential for activity and may involve XPO1. Binds to human KPNB1, XPO1, TNPO1, RANBP5 and IPO7. Interacts with the viral Integrase. Interacts with human KHDRBS1. Interacts with human NAP1; this interaction decreases Rev multimerization and stimulates its activity. Interacts with human DEAD-box helicases DDX3 and DDX24; these interactions may serve for viral RNA export to the cytoplasm and packaging, respectively. Interacts with human PSIP1; this interaction may inhibit HIV-1 DNA integration by promoting dissociation of the Integrase-LEDGF/p75 complex. Asymmetrically arginine dimethylated at one site by host PRMT6. Methylation impairs the RNA-binding activity and export of viral RNA from the nucleus to the cytoplasm. In terms of processing, phosphorylated by protein kinase CK2. Presence of, and maybe binding to the N-terminus of the regulatory beta subunit of CK2 is necessary for CK2-mediated Rev's phosphorylation.

It localises to the host nucleus. Its subcellular location is the host nucleolus. It is found in the host cytoplasm. Its function is as follows. Escorts unspliced or incompletely spliced viral pre-mRNAs (late transcripts) out of the nucleus of infected cells. These pre-mRNAs carry a recognition sequence called Rev responsive element (RRE) located in the env gene, that is not present in fully spliced viral mRNAs (early transcripts). This function is essential since most viral proteins are translated from unspliced or partially spliced pre-mRNAs which cannot exit the nucleus by the pathway used by fully processed cellular mRNAs. Rev itself is translated from a fully spliced mRNA that readily exits the nucleus. Rev's nuclear localization signal (NLS) binds directly to KPNB1/Importin beta-1 without previous binding to KPNA1/Importin alpha-1. KPNB1 binds to the GDP bound form of RAN (Ran-GDP) and targets Rev to the nucleus. In the nucleus, the conversion from Ran-GDP to Ran-GTP dissociates Rev from KPNB1 and allows Rev's binding to the RRE in viral pre-mRNAs. Rev multimerization on the RRE via cooperative assembly exposes its nuclear export signal (NES) to the surface. Rev can then form a complex with XPO1/CRM1 and Ran-GTP, leading to nuclear export of the complex. Conversion from Ran-GTP to Ran-GDP mediates dissociation of the Rev/RRE/XPO1/RAN complex, so that Rev can return to the nucleus for a subsequent round of export. Beside KPNB1, also seems to interact with TNPO1/Transportin-1, RANBP5/IPO5 and IPO7/RANBP7 for nuclear import. The nucleoporin-like HRB/RIP is an essential cofactor that probably indirectly interacts with Rev to release HIV RNAs from the perinuclear region to the cytoplasm. This chain is Protein Rev, found in Homo sapiens (Human).